The sequence spans 467 residues: Tripartite motif-containing protein 75 (467 aa).

The RING-type zinc-finger motif lies at 16–57; the sequence is CPICLDDLTDPVTVECGHNFCRSCIKDFWAGQQATSSCPVCR. The segment at 90–131 adopts a B box-type zinc-finger fold; it reads ESSTSCERHNQALTLFCEDDLQLLCDQCVEPESHGRHQVLSI. Zn(2+)-binding residues include C95, H98, C117, and H123. Positions 168-222 form a coiled coil; it reads VTLREQAEAQRSQLTSECEKLMRFLDQEERAAFSRLEDEEMRLEKRLLDNIAALE. In terms of domain architecture, B30.2/SPRY spans 276 to 466; it reads YSFPLQYSAL…LRLCSATDSE (191 aa).

Belongs to the TRIM/RBCC family.

It localises to the cytoplasm. The protein localises to the cytoskeleton. The protein resides in the spindle. May play a role in female meiosis. In Mus musculus (Mouse), this protein is Tripartite motif-containing protein 75.